A 520-amino-acid polypeptide reads, in one-letter code: Chaperone Ric-8B (520 aa).

Ser-468 bears the Phosphoserine mark. At Thr-473 the chain carries Phosphothreonine.

This sequence belongs to the synembryn family. Interacts with GDP-bound G(s) G-alpha proteins GNAL and GNAS. Does not interact with G-alpha proteins when they are in complex with subunits beta and gamma. In terms of tissue distribution, predominantly expressed in the mature olfactory sensory neurons and also in a few regions in the brain.

It localises to the cytoplasm. Its subcellular location is the cell cortex. Functionally, chaperone that specifically binds and folds nascent G(s) G-alpha proteins (GNAS and GNAL) prior to G protein heterotrimer formation, promoting their association with the plasma membrane. Also acts as a guanine nucleotide exchange factor (GEF) for G(s) proteins by stimulating exchange of bound GDP for free GTP. Acts as an important component for odorant signal transduction by mediating GNAL (G(olf)-alpha) folding, thereby promoting-dependent cAMP accumulation in olfactory sensory neurons. This chain is Chaperone Ric-8B, found in Mus musculus (Mouse).